We begin with the raw amino-acid sequence, 144 residues long: MVQKQSMANNNCIFCGIVEGNVKSFKVGENEHAFAFLDAFPVADGHTLVIPKKHAVNYSSTDDESLKAVSLLAKEMALKLQQRLQPAGLNYVVNEGAKAGQEVFHYHMHVVPKYETGLGFCYNVRKTNNRSIEANWELLTKEVD.

An HIT domain is found at Ile-13–Phe-120. Positions His-105–His-109 match the Histidine triad motif motif.

This is an uncharacterized protein from Mycoplasma pneumoniae (strain ATCC 29342 / M129 / Subtype 1) (Mycoplasmoides pneumoniae).